The primary structure comprises 550 residues: C-type lectin domain family 4 member F (550 aa).

At 1 to 42 the chain is on the cytoplasmic side; that stretch reads MKEAELNRDVAKFCTDNQCVILQPQGLGPKSAAPMAPRTLRH. Residues 43–69 form a helical; Signal-anchor for type II membrane protein membrane-spanning segment; the sequence is VQAIVALVVVTVFFSLLALFVVVLQPW. The Extracellular portion of the chain corresponds to 70-550; that stretch reads RQKQNEDHPV…DWSVARTDQS (481 aa). Residues asparagine 87, asparagine 93, asparagine 115, asparagine 132, asparagine 209, and asparagine 255 are each glycosylated (N-linked (GlcNAc...) asparagine). The C-type lectin domain maps to 438–538; it reads NFCVSQGAHL…GTAYNWVCKK (101 aa). Disulfide bonds link cysteine 440–cysteine 536 and cysteine 516–cysteine 528.

As to expression, kupffer cells.

It localises to the membrane. Its function is as follows. Receptor with an affinity for galactose and fucose. Could be involved in endocytosis. The polypeptide is C-type lectin domain family 4 member F (Clec4f) (Rattus norvegicus (Rat)).